Here is a 77-residue protein sequence, read N- to C-terminus: Large ribosomal subunit protein bL28 (77 aa).

The disordered stretch occupies residues 1-20 (MSRVCQVTGKGPVTGNNISH).

Belongs to the bacterial ribosomal protein bL28 family.

This is Large ribosomal subunit protein bL28 from Pseudomonas syringae pv. tomato (strain ATCC BAA-871 / DC3000).